The chain runs to 427 residues: MERDFLGAIGRKEEAAGKPEEHSDYRGGGGGASAAMQWQFPATKVGAASSAFMSFRSSAAAAREEDPKEAAVFDRFSLSGFRPPPRPSPGDAFDGAAAMKQRQFGFNGRQQYAAAAQHGHREQGVDSYGVAAPHHFPSPSPSPRHPVPFGHANPMLRVHSLPNVAGGSPYRNQSFSVGNSVAGSTVGVYGGPRDLQNPKVTQMTIFYDGLVNVFDNIPVEKAQELMLLASRASIPSPPSAARKSDSPISAAAKLTVPEALPARQIVVQKPEASVPLVSGVSNPITIVSQAVTLPKSSSSSNDSAGPKSGGLPLAVTPLSQASPSQPIPVATTNASAIMPRAVPQARKASLARFLEKRKERVSSVAPYPSSKSPLESSDTIGSPSTPSKSSCTDITPSTNNCEDSLCLGQPRNISFSSQEPPSTKLQI.

Over residues 1-25 (MERDFLGAIGRKEEAAGKPEEHSDY) the composition is skewed to basic and acidic residues. The interval 1 to 33 (MERDFLGAIGRKEEAAGKPEEHSDYRGGGGGAS) is disordered. A Tify domain is found at 196-231 (QNPKVTQMTIFYDGLVNVFDNIPVEKAQELMLLASR). Composition is skewed to polar residues over residues 293-303 (LPKSSSSSNDS) and 317-327 (PLSQASPSQPI). The segment at 293-327 (LPKSSSSSNDSAGPKSGGLPLAVTPLSQASPSQPI) is disordered. The Jas motif lies at 343-367 (PQARKASLARFLEKRKERVSSVAPY). The short motif at 345 to 352 (ARKASLAR) is the Nuclear localization signal element. The tract at residues 360–427 (RVSSVAPYPS…QEPPSTKLQI (68 aa)) is disordered. Composition is skewed to polar residues over residues 369 to 402 (SSKSPLESSDTIGSPSTPSKSSCTDITPSTNNCE) and 411 to 427 (RNISFSSQEPPSTKLQI).

The protein belongs to the TIFY/JAZ family. In terms of processing, ubiquitinated.

It is found in the nucleus. Functionally, repressor of jasmonate responses. The sequence is that of Protein TIFY 6a from Oryza sativa subsp. indica (Rice).